The following is a 107-amino-acid chain: Small integral membrane protein 19 (107 aa).

A helical membrane pass occupies residues 25 to 43 (ATNVYLIVILVSFGLFMYA).

This sequence belongs to the SMIM19 family.

The protein resides in the membrane. The sequence is that of Small integral membrane protein 19 (SMIM19) from Homo sapiens (Human).